Consider the following 584-residue polypeptide: Arginine--tRNA ligase (584 aa).

Residues 127–137 carry the 'HIGH' region motif; that stretch reads PNTNKPLHVGH.

Belongs to the class-I aminoacyl-tRNA synthetase family. As to quaternary structure, monomer.

It localises to the cytoplasm. It carries out the reaction tRNA(Arg) + L-arginine + ATP = L-arginyl-tRNA(Arg) + AMP + diphosphate. The sequence is that of Arginine--tRNA ligase from Borrelia turicatae (strain 91E135).